We begin with the raw amino-acid sequence, 191 residues long: Large ribosomal subunit protein uL5 (191 aa).

The protein belongs to the universal ribosomal protein uL5 family. Part of the 50S ribosomal subunit; part of the 5S rRNA/L5/L18/L25 subcomplex. Contacts the 5S rRNA and the P site tRNA. Forms a bridge to the 30S subunit in the 70S ribosome.

Its function is as follows. This is one of the proteins that bind and probably mediate the attachment of the 5S RNA into the large ribosomal subunit, where it forms part of the central protuberance. In the 70S ribosome it contacts protein S13 of the 30S subunit (bridge B1b), connecting the 2 subunits; this bridge is implicated in subunit movement. Contacts the P site tRNA; the 5S rRNA and some of its associated proteins might help stabilize positioning of ribosome-bound tRNAs. In Micrococcus luteus (strain ATCC 4698 / DSM 20030 / JCM 1464 / CCM 169 / CCUG 5858 / IAM 1056 / NBRC 3333 / NCIMB 9278 / NCTC 2665 / VKM Ac-2230) (Micrococcus lysodeikticus), this protein is Large ribosomal subunit protein uL5.